The chain runs to 548 residues: Cytochrome P450 monooxygenase lcsK (548 aa).

The next 2 membrane-spanning stretches (helical) occupy residues 28–48 (HAYPWRYVALLLAGSLSLWAF) and 68–88 (VLLFLYLGGLAGSVLLYRLFF). 4 N-linked (GlcNAc...) asparagine glycosylation sites follow: N172, N223, N242, and N404. C487 serves as a coordination point for heme.

The protein belongs to the cytochrome P450 family. Heme serves as cofactor.

Its subcellular location is the membrane. It functions in the pathway secondary metabolite biosynthesis. Its function is as follows. Cytochrome P450 monooxygenase; part of the gene cluster that mediates the biosynthesis of the lipopeptide antibiotics leucinostatins that show extensive biological activities, including antimalarial, antiviral, antibacterial, antifungal, and antitumor activities, as well as phytotoxic. Leucinostatin A contains nine amino acid residues, including the unusual amino acid 4-methyl-L-proline (MePro), 2-amino-6-hydroxy-4-methyl-8-oxodecanoic acid (AHyMeOA), 3-hydroxyleucine (HyLeu), alpha-aminoisobutyric acid (AIB), beta-Ala, a 4-methylhex-2-enoic acid at the N-terminus as well as a N1,N1-dimethylpropane-1,2-diamine (DPD) at the C-terminus. The biosynthesis of leucinostatins is probably initiated with the assembly of 4-methylhex-2-enoic acid by a reducing PKS. Two reducing polyketide synthases, lcsB and lcsC, have been identified in the cluster and it is not clear which is the one that assembles 4-methylhex-2-enoic acid since both contain KS, AT, DH, cMT, ER, KR and ACP domains. The polyketide residue might be transferred to the NRPS lcsA, mediated by two additional enzymes, the acyl-CoA ligase lcsD and the thioesterase lcsE. The linear polyketide carboxylic acid, which is released from PKS, is converted to a CoA thioester by lcsD, and then lcsE hydrolyzes the thiol bond and shuttles the polyketide intermediate to lcsA. The C domain of the first module catalyzed the condensation of 4-methylhex-2-enoic acid and MePro carried by domain A1, followed by successive condensations of nine amino acids to trigger the elongation of the linear peptide. A5 and A6 domains of lcsA are proposed to incorporate leucine, A2 AHyMeOA, and A3 incorporates HyLeu. A4, A7 and A8 incorporate AIB. The AHyMeOA in leucinostatin A activated by the A2 might be produced by the second PKS (lcsB or lcsC) present within the cluster. The MePro is probably produced via leucine cyclization and may originate from a separate pathway, independent of the cluster. Another nonproteinogenic amino acid, beta-Ala, could be produced by an aspartic acid decarboxylase also localized outside of the cluster. Two candidates are VFPBJ_01400 and VFPBJ_10476. The final peptide scaffold may be released by the NAD(P)H-dependent thioester reductase (TE) at the C-terminal region of lcsA. Transamination of the lcsA product by the transaminase lcsP may produce DPD at the C-terminus. Further hydroxylation steps performed alternatively by the cytochrome P450 monooxygenases lcsI, lcsK and lcsN then yield the non-methylated leucinostatins precursor. It is also possible that leucines can be hydroxylated prior to their incorporation into the peptide. Varying extents of methylation then lead to the formation of leucinostatins A and B. The protein is Cytochrome P450 monooxygenase lcsK of Purpureocillium lilacinum (Paecilomyces lilacinus).